Here is a 158-residue protein sequence, read N- to C-terminus: Transcription elongation factor GreA (158 aa).

The stretch at 4 to 75 (QKQYPMTQEG…QRVENMLRNA (72 aa)) forms a coiled coil.

It belongs to the GreA/GreB family.

Functionally, necessary for efficient RNA polymerase transcription elongation past template-encoded arresting sites. The arresting sites in DNA have the property of trapping a certain fraction of elongating RNA polymerases that pass through, resulting in locked ternary complexes. Cleavage of the nascent transcript by cleavage factors such as GreA or GreB allows the resumption of elongation from the new 3'terminus. GreA releases sequences of 2 to 3 nucleotides. The protein is Transcription elongation factor GreA of Staphylococcus saprophyticus subsp. saprophyticus (strain ATCC 15305 / DSM 20229 / NCIMB 8711 / NCTC 7292 / S-41).